The following is a 178-amino-acid chain: Large ribosomal subunit protein uL6 (178 aa).

The protein belongs to the universal ribosomal protein uL6 family. As to quaternary structure, part of the 50S ribosomal subunit.

Functionally, this protein binds to the 23S rRNA, and is important in its secondary structure. It is located near the subunit interface in the base of the L7/L12 stalk, and near the tRNA binding site of the peptidyltransferase center. This Streptococcus suis (strain 05ZYH33) protein is Large ribosomal subunit protein uL6.